Consider the following 375-residue polypeptide: Tubulinyl-Tyr carboxypeptidase 1 (375 aa).

The span at 1 to 33 shows a compositional bias: low complexity; sequence MPGGKKVVPSGSSSASPNAAATTTAAAAAAAAA. The segment at 1–69 is disordered; that stretch reads MPGGKKVVPS…EEDLRDGGVP (69 aa). Positions 53–63 are enriched in acidic residues; that stretch reads EEPEEEGEEDL. Residues Cys-179, His-214, and Ser-231 contribute to the active site. A disordered region spans residues 309–375; sequence RDMRLKIGKG…PDLSGYQIRV (67 aa). Residues 329–375 are involved in heparin-binding and antiangiogenic activity; it reads KKDVSSPQRAQSSPHRRNSRSERRPSGEKKPAEPKAMPDLSGYQIRV. Positions 347-361 are enriched in basic and acidic residues; that stretch reads SRSERRPSGEKKPAE.

Belongs to the transglutaminase-like superfamily. Vasohibin family. Interacts with SVBP; interaction enhances VASH1 tyrosine carboxypeptidase activity. Post-translationally, ubiquitinated in vitro. Expressed at low level in proliferating endothelial cells at the sprouting front but highly expressed in nonproliferating endothelial cells in the termination zone.

The protein localises to the cytoplasm. It is found in the secreted. The enzyme catalyses C-terminal L-alpha-aminoacyl-L-glutamyl-L-glutamyl-L-tyrosyl-[tubulin] + H2O = C-terminal L-alpha-aminoacyl-L-glutamyl-L-glutamyl-[tubulin] + L-tyrosine. Tyrosine carboxypeptidase that removes the C-terminal tyrosine residue of alpha-tubulin, thereby regulating microtubule dynamics and function. Acts as an angiogenesis inhibitor: inhibits migration, proliferation and network formation by endothelial cells as well as angiogenesis. This inhibitory effect is selective to endothelial cells as it does not affect the migration of smooth muscle cells or fibroblasts. The sequence is that of Tubulinyl-Tyr carboxypeptidase 1 from Mus musculus (Mouse).